Here is a 127-residue protein sequence, read N- to C-terminus: Aspartate 1-decarboxylase (127 aa).

Ser25 functions as the Schiff-base intermediate with substrate; via pyruvic acid in the catalytic mechanism. Ser25 is modified (pyruvic acid (Ser)). Thr57 contacts substrate. Residue Tyr58 is the Proton donor of the active site. 73-75 (GAA) contacts substrate.

Belongs to the PanD family. Heterooctamer of four alpha and four beta subunits. Requires pyruvate as cofactor. Is synthesized initially as an inactive proenzyme, which is activated by self-cleavage at a specific serine bond to produce a beta-subunit with a hydroxyl group at its C-terminus and an alpha-subunit with a pyruvoyl group at its N-terminus.

It is found in the cytoplasm. The catalysed reaction is L-aspartate + H(+) = beta-alanine + CO2. The protein operates within cofactor biosynthesis; (R)-pantothenate biosynthesis; beta-alanine from L-aspartate: step 1/1. Catalyzes the pyruvoyl-dependent decarboxylation of aspartate to produce beta-alanine. This is Aspartate 1-decarboxylase from Clostridium botulinum (strain ATCC 19397 / Type A).